We begin with the raw amino-acid sequence, 94 residues long: Integration host factor subunit beta (94 aa).

Belongs to the bacterial histone-like protein family. As to quaternary structure, heterodimer of an alpha and a beta chain.

In terms of biological role, this protein is one of the two subunits of integration host factor, a specific DNA-binding protein that functions in genetic recombination as well as in transcriptional and translational control. This Pasteurella multocida (strain Pm70) protein is Integration host factor subunit beta (ihfB).